Here is a 465-residue protein sequence, read N- to C-terminus: Chromosomal replication initiator protein DnaA (465 aa).

A domain I, interacts with DnaA modulators region spans residues M1–V84. The domain II stretch occupies residues V84–S128. The tract at residues N129 to A345 is domain III, AAA+ region. Residues G173, G175, K176, and T177 each coordinate ATP. Positions N346–S465 are domain IV, binds dsDNA.

Belongs to the DnaA family. As to quaternary structure, oligomerizes as a right-handed, spiral filament on DNA at oriC.

Its subcellular location is the cytoplasm. Plays an essential role in the initiation and regulation of chromosomal replication. ATP-DnaA binds to the origin of replication (oriC) to initiate formation of the DNA replication initiation complex once per cell cycle. Binds the DnaA box (a 9 base pair repeat at the origin) and separates the double-stranded (ds)DNA. Forms a right-handed helical filament on oriC DNA; dsDNA binds to the exterior of the filament while single-stranded (ss)DNA is stabiized in the filament's interior. The ATP-DnaA-oriC complex binds and stabilizes one strand of the AT-rich DNA unwinding element (DUE), permitting loading of DNA polymerase. After initiation quickly degrades to an ADP-DnaA complex that is not apt for DNA replication. Binds acidic phospholipids. The sequence is that of Chromosomal replication initiator protein DnaA from Pectobacterium atrosepticum (strain SCRI 1043 / ATCC BAA-672) (Erwinia carotovora subsp. atroseptica).